The sequence spans 1996 residues: Protein Shroom3 (1996 aa).

In terms of domain architecture, PDZ spans tyrosine 25–valine 110. Residues lysine 150 to proline 173 are disordered. Serine 213 is subject to Phosphoserine. Disordered regions lie at residues asparagine 340 to serine 389, glutamate 437 to tyrosine 468, aspartate 568 to aspartate 629, arginine 673 to phenylalanine 772, and phenylalanine 788 to serine 1053. 2 positions are modified to phosphoserine: serine 439 and serine 443. Positions lysine 700–arginine 718 are enriched in basic and acidic residues. The span at histidine 750–alanine 768 shows a compositional bias: low complexity. Residues threonine 814–asparagine 823 are compositionally biased toward polar residues. At serine 816 the chain carries Phosphoserine. Composition is skewed to basic and acidic residues over residues glutamate 826 to glutamate 836 and glutamine 846 to serine 859. Polar residues-rich tracts occupy residues proline 862–alanine 871 and arginine 887–serine 896. At serine 890 the chain carries Phosphoserine. The segment covering glutamate 897–glycine 909 has biased composition (basic and acidic residues). Residues serine 910 and serine 913 each carry the phosphoserine modification. Positions isoleucine 928–glycine 1030 constitute an ASD1 domain. Positions alanine 950–alanine 964 are enriched in low complexity. Serine 970 is subject to Phosphoserine. Residues leucine 1011–asparagine 1027 are compositionally biased toward basic and acidic residues. Phosphoserine is present on residues serine 1069 and serine 1072. 4 disordered regions span residues lysine 1093 to arginine 1115, serine 1137 to glutamate 1223, glutamate 1315 to lysine 1573, and serine 1627 to aspartate 1665. The span at serine 1137–glutamine 1148 shows a compositional bias: low complexity. Phosphoserine is present on serine 1221. The span at tyrosine 1366–arginine 1375 shows a compositional bias: polar residues. The segment covering cysteine 1403–arginine 1417 has biased composition (basic and acidic residues). A Phosphoserine modification is found at serine 1441. Over residues lysine 1459 to proline 1472 the composition is skewed to polar residues. Positions proline 1498 to proline 1515 are enriched in basic and acidic residues. A compositionally biased stretch (pro residues) spans glutamate 1524–glutamine 1536. Positions proline 1634–glutamine 1649 are enriched in polar residues. A compositionally biased stretch (basic and acidic residues) spans leucine 1651 to aspartate 1665. The ASD2 domain occupies glutamate 1669 to proline 1957.

The protein belongs to the shroom family. As to quaternary structure, interacts with F-actin. Interacts with ROCK1.

The protein localises to the cell junction. The protein resides in the adherens junction. It is found in the cytoplasm. Its subcellular location is the cytoskeleton. It localises to the apical cell membrane. Functionally, controls cell shape changes in the neuroepithelium during neural tube closure. Induces apical constriction in epithelial cells by promoting the apical accumulation of F-actin and myosin II, and probably by bundling stress fibers. Induces apicobasal cell elongation by redistributing gamma-tubulin and directing the assembly of robust apicobasal microtubule arrays. This Homo sapiens (Human) protein is Protein Shroom3 (SHROOM3).